A 265-amino-acid polypeptide reads, in one-letter code: Phosphatidylglycerol--prolipoprotein diacylglyceryl transferase (265 aa).

The next 7 membrane-spanning stretches (helical) occupy residues Val17 to Gly37, Leu57 to Tyr77, Ile89 to Ala109, Phe127 to Gly147, Gln176 to Ala196, Leu201 to Val218, and Leu233 to Ala253. Position 140 (Arg140) interacts with a 1,2-diacyl-sn-glycero-3-phospho-(1'-sn-glycerol).

Belongs to the Lgt family.

It is found in the cell inner membrane. The enzyme catalyses L-cysteinyl-[prolipoprotein] + a 1,2-diacyl-sn-glycero-3-phospho-(1'-sn-glycerol) = an S-1,2-diacyl-sn-glyceryl-L-cysteinyl-[prolipoprotein] + sn-glycerol 1-phosphate + H(+). It participates in protein modification; lipoprotein biosynthesis (diacylglyceryl transfer). Its function is as follows. Catalyzes the transfer of the diacylglyceryl group from phosphatidylglycerol to the sulfhydryl group of the N-terminal cysteine of a prolipoprotein, the first step in the formation of mature lipoproteins. The chain is Phosphatidylglycerol--prolipoprotein diacylglyceryl transferase from Azoarcus sp. (strain BH72).